Here is a 469-residue protein sequence, read N- to C-terminus: MDASLEKIADPTLAEMGKNLKEAVKMLEDSQRRTEEENGKKLISRDIPGPLQGSGQDMVSILQLVQNLMHGDEDEEPQSPRIQNIGEQGHVAVLGHSLGAYILTLDEEKLRKLTTRILSDTTLWLCRIFRYENGCAYFHEEEREGLAKICRLAIHSQYEDFVVDGFSGLYNKKPVIYLSAAARPGLGQYLCNQLGLPFPCLCRVPCNTMFGSQHQMDVAFLEKLIKDDIERGRLPLLLVANAGTAAVGHTDKIGRLKELCEQYGIWLHVEGVNLATLALGYVSSSVLAAAKCDSMTMTPGPWLGLPAVPAVTLYKHDPALTLVAGLISNKPTDKLRALPLWLSLQYLGLDGFVERIKHACQLSQWLQESLKKVNYIKILVEDELSSPVVVFRFFQELPGSDPVFKAVPVPNMTPSAVGRERHSCDALNLWLGEQLKQLVPASGLTVMDLEAEGTCLRFSPLMTAAGMIS.

Residues 12 to 40 (TLAEMGKNLKEAVKMLEDSQRRTEEENGK) are a coiled coil. Residues 28 to 44 (EDSQRRTEEENGKKLIS) show a composition bias toward basic and acidic residues. The tract at residues 28–47 (EDSQRRTEEENGKKLISRDI) is disordered.

It belongs to the group II decarboxylase family. Pyridoxal 5'-phosphate is required as a cofactor.

The sequence is that of Putative pyridoxal-dependent decarboxylase domain-containing protein 2 (PDXDC2P) from Homo sapiens (Human).